The chain runs to 161 residues: Ragulator complex protein LAMTOR1 (161 aa).

The interval 1-43 (MGCCYSSENEDSDQDREERKLLLDPSSPPTKALNGAEPNYHSL) is disordered. Glycine 2 carries N-myristoyl glycine lipidation. S-palmitoyl cysteine attachment occurs at residues cysteine 3 and cysteine 4. Lysine 20 participates in a covalent cross-link: Glycyl lysine isopeptide (Lys-Gly) (interchain with G-Cter in ubiquitin). A Phosphoserine modification is found at serine 27. Lysine 31 is covalently cross-linked (Glycyl lysine isopeptide (Lys-Gly) (interchain with G-Cter in ubiquitin)). Phosphoserine occurs at positions 42 and 56. Lysine 60 participates in a covalent cross-link: Glycyl lysine isopeptide (Lys-Gly) (interchain with G-Cter in ubiquitin). Serine 98 is modified (phosphoserine). Glycyl lysine isopeptide (Lys-Gly) (interchain with G-Cter in ubiquitin) cross-links involve residues lysine 103 and lysine 104. The interval 121 to 161 (SEPIPFSDLQQVSRIAAYAYSALSQIRVDAKEELVVQFGIP) is interaction with LAMTOR2 and LAMTOR3. Phosphoserine is present on serine 141.

Belongs to the LAMTOR1 family. In terms of assembly, part of the Ragulator complex composed of LAMTOR1, LAMTOR2, LAMTOR3, LAMTOR4 and LAMTOR5. LAMTOR4 and LAMTOR5 form a heterodimer that interacts, through LAMTOR1, with a LAMTOR2, LAMTOR3 heterodimer. Interacts with LAMTOR2 and LAMTOR3; the interaction is direct. The Ragulator complex interacts with both the mTORC1 complex and heterodimers constituted of the Rag GTPases RagA/RRAGA, RagB/RRAGB, RagC/RRAGC and RagD/RRAGD; regulated by amino acid availability. The Ragulator complex interacts with SLC38A9; the probable amino acid sensor. Component of the lysosomal folliculin complex (LFC), composed of FLCN, FNIP1 (or FNIP2), RagA/RRAGA or RagB/RRAGB GDP-bound, RagC/RRAGC or RagD/RRAGD GTP-bound, and Ragulator. Associates with the lysosomal V-ATPase complex; interaction promotes the guanine nucleotide exchange factor (GEF) of the Ragulator complex. Interacts with MMP14. Interacts with CDKN1B; prevents the interaction of CDKN1B with RHOA leaving RHOA in a form accessible to activation by ARHGEF2. Interacts with PIP4P1. In terms of processing, N-terminal myristoylation and palmitoylation mediates its recruitment to lysosome membranes, thereby promoting localization of the Ragulator complex to lysosomes. N-myristoylation by NMT1 is required for palmitoylation at Cys-3 and Cys-4. May be palmitoylated by ZDHHC3. Ubiquitinated at Lys-60, Lys-103 and Lys-104 by UBE3A, promoting its degradation by the proteasome. Ubiquitination at Lys-20 impairs the association with the lysosomal V-ATPase complex. Deubiquitination at Lys-20 by USP32 promotes the association with the lysosomal V-ATPase complex and subsequent activation of the mTORC1 complex.

The protein resides in the lysosome membrane. It is found in the late endosome membrane. Its function is as follows. Key component of the Ragulator complex, a multiprotein complex involved in amino acid sensing and activation of mTORC1, a signaling complex promoting cell growth in response to growth factors, energy levels, and amino acids. Activated by amino acids through a mechanism involving the lysosomal V-ATPase, the Ragulator plays a dual role for the small GTPases Rag (RagA/RRAGA, RagB/RRAGB, RagC/RRAGC and/or RagD/RRAGD): it (1) acts as a guanine nucleotide exchange factor (GEF), activating the small GTPases Rag and (2) mediates recruitment of Rag GTPases to the lysosome membrane. Activated Ragulator and Rag GTPases function as a scaffold recruiting mTORC1 to lysosomes where it is in turn activated. LAMTOR1 is directly responsible for anchoring the Ragulator complex to the lysosomal membrane. LAMTOR1 wraps around the other subunits of the Ragulator complex to hold them in place and interacts with the Rag GTPases, thereby playing a key role in the recruitment of the mTORC1 complex to lysosomes. Also involved in the control of embryonic stem cells differentiation via non-canonical RagC/RRAGC and RagD/RRAGD activation: together with FLCN, it is necessary to recruit and activate RagC/RRAGC and RagD/RRAGD at the lysosomes, and to induce exit of embryonic stem cells from pluripotency via non-canonical, mTOR-independent TFE3 inactivation. Also required for late endosomes/lysosomes biogenesis it may regulate both the recycling of receptors through endosomes and the MAPK signaling pathway through recruitment of some of its components to late endosomes. May be involved in cholesterol homeostasis regulating LDL uptake and cholesterol release from late endosomes/lysosomes. May also play a role in RHOA activation. This Homo sapiens (Human) protein is Ragulator complex protein LAMTOR1.